The following is a 465-amino-acid chain: NADH-quinone oxidoreductase subunit N (465 aa).

13 helical membrane passes run 6 to 26 (ILPE…GIVF), 30 to 50 (TINL…ILSA), 66 to 86 (LYIR…LLLL), 98 to 118 (SILI…NNLI), 156 to 176 (ALSS…TGLV), 194 to 214 (IVFG…IAPF), 226 to 246 (PTIV…TFLI), 261 to 281 (FQPV…FGAL), 289 to 309 (LLAY…SIFT), 317 to 337 (LIYL…FIQI), 363 to 383 (ILLF…KLFI), 391 to 411 (GFIG…YYYL), and 432 to 452 (SLFI…MCVE).

The protein belongs to the complex I subunit 2 family. In terms of assembly, NDH-1 is composed of 14 different subunits. Subunits NuoA, H, J, K, L, M, N constitute the membrane sector of the complex.

The protein localises to the cell membrane. It carries out the reaction a quinone + NADH + 5 H(+)(in) = a quinol + NAD(+) + 4 H(+)(out). In terms of biological role, NDH-1 shuttles electrons from NADH, via FMN and iron-sulfur (Fe-S) centers, to quinones in the respiratory chain. The immediate electron acceptor for the enzyme in this species is believed to be ubiquinone. Couples the redox reaction to proton translocation (for every two electrons transferred, four hydrogen ions are translocated across the cytoplasmic membrane), and thus conserves the redox energy in a proton gradient. This is NADH-quinone oxidoreductase subunit N from Wolbachia sp. subsp. Brugia malayi (strain TRS).